A 656-amino-acid chain; its full sequence is Fidgetin-like protein 1 (656 aa).

Residues 293–302 (KYSNQPQRNP) are compositionally biased toward polar residues. Positions 293 to 354 (KYSNQPQRNP…QGNSEMNAPS (62 aa)) are disordered. Residues 331 to 340 (RQEDVQDSNR) show a composition bias toward basic and acidic residues. ATP-binding positions include Ala-386 and 426-431 (GTGKTL).

This sequence belongs to the AAA ATPase family. Hexamer. Mg(2+) is required as a cofactor.

Its subcellular location is the nucleus. It is found in the cytoplasm. The protein resides in the perinuclear region. The catalysed reaction is ATP + H2O = ADP + phosphate + H(+). Its function is as follows. May be involved in DNA double-strand break (DBS) repair via homologous recombination (HR). May regulate osteoblast proliferation and differentiation. In Xenopus tropicalis (Western clawed frog), this protein is Fidgetin-like protein 1 (fignl1).